Here is a 6631-residue protein sequence, read N- to C-terminus: Replicase polyprotein 1ab (6631 aa).

Topologically, residues 1-1752 (MASSLKQGVS…VSSYKIVLCK (1752 aa)) are cytoplasmic. 2 consecutive Ubiquitin-like domains span residues 675–780 (KTVT…RDYE) and 1177–1229 (CKQK…ILFI). The 177-residue stretch at 1005–1181 (VKPATCEKPK…YFDATCKQKT (177 aa)) folds into the Macro domain. The 262-residue stretch at 1238 to 1499 (EYYGLDAQKY…AKVVKEDVSN (262 aa)) folds into the Peptidase C16 domain. Residue Cys-1276 is the For PL-PRO activity of the active site. The C4-type; degenerate zinc finger occupies 1355-1392 (CNCGVKSYELRGLEACIQPVRAPNLLHFKTQYSNCPTC). Residues His-1439 and Asp-1450 each act as for PL-PRO activity in the active site. Residues 1753–1773 (VVFATLLIVWFIYTSNPVVFT) form a helical membrane-spanning segment. The segment at 1753 to 1866 (VVFATLLIVW…KPVAGFVIIC (114 aa)) is HD1. A 3Ecto domain is found at 1771–1835 (VFTGIRVLDF…AYSVEQIYKD (65 aa)). The Lumenal segment spans residues 1774-1845 (GIRVLDFLFE…AASGINFNWN (72 aa)). 2 cysteine pairs are disulfide-bonded: Cys-1787/Cys-1813 and Cys-1804/Cys-1810. The chain crosses the membrane as a helical span at residues 1846–1866 (WLYLVFLILFVKPVAGFVIIC). Topologically, residues 1867–2282 (YCVKYLVLSS…TFKWFMSCFK (416 aa)) are cytoplasmic. The interval 1913–2003 (YVQVHHILYC…KLKRHVKPTA (91 aa)) is Y1. Residues 1913-2265 (YVQVHHILYC…HTQKLLVEKK (353 aa)) form the CoV Nsp3 Y domain. Residues His-1917, Cys-1922, Cys-1927, Cys-1930, Cys-1963, His-1966, Cys-1970, and Cys-1973 each contribute to the Zn(2+) site. The segment at 1917-1930 (HHILYCKDVTCEVC) is ZF1. The segment at 1963 to 1973 (CKRHNWYCRNC) is ZF2. Residues 2004 to 2106 (YAYHVVYEAC…ILDQALYEQL (103 aa)) are Y2. The tract at residues 2004-2265 (YAYHVVYEAC…HTQKLLVEKK (262 aa)) is coV-Y. The Y3 stretch occupies residues 2107–2165 (IVEPVSKSVIDKVCSILSNIISVDTAALNYKAGTLRDALLSITKDEEAVDMAIFCHNHE). Residues 2166-2265 (VEYTGDGFTN…HTQKLLVEKK (100 aa)) form a Y4 region. The chain crosses the membrane as a helical span at residues 2283–2303 (WLFVFYILFTACCLGYYYMEM). Positions 2283–2666 (WLFVFYILFT…LACCYLGFIL (384 aa)) are HD2. The Lumenal segment spans residues 2304–2561 (NKSFVHPMYD…FFTGVNPNIY (258 aa)). Residues 2562–2582 (IQLATMFLILVVIVLIFAMVI) form a helical membrane-spanning segment. Over 2583-2613 (KFQGVFKAYATIVFTIMLVWVINAFVLCVHS) the chain is Cytoplasmic. A helical membrane pass occupies residues 2614 to 2634 (YNSVLAVILLVLYCYASMVTS). Topologically, residues 2635-2645 (RNTAIIMHCWL) are lumenal. Residues 2646 to 2666 (VFTFGLIVPTWLACCYLGFIL) traverse the membrane as a helical segment. The Cytoplasmic portion of the chain corresponds to 2667 to 3098 (YMYTPLVFWC…SSFVRKATSW (432 aa)). Residues 2686–2781 (LYDGNEFVGN…RYSIGVSRLQ (96 aa)) enclose the Nsp4C domain. The region spanning 2782–3088 (AGFKKLVSPS…FNQVGGVRLQ (307 aa)) is the Peptidase C30 domain. Active-site for 3CL-PRO activity residues include His-2822 and Cys-2924. A helical transmembrane segment spans residues 3099-3119 (FWSRCVLACFLFVLCAIVLFT). An HD3 region spans residues 3099-3319 (FWSRCVLACF…WLCTCYFGLY (221 aa)). Residues 3120-3123 (AVPL) lie on the Lumenal side of the membrane. The helical transmembrane segment at 3124–3144 (KFYVHAAVILLMAVLFISFTV) threads the bilayer. Residues 3145 to 3153 (KHVMAYMDT) are Cytoplasmic-facing. Residues 3154 to 3174 (FLLPTLITVIIGVCAEVPFIY) traverse the membrane as a helical segment. The Lumenal segment spans residues 3175 to 3190 (NTLISQVVIFLSQWYD). The helical transmembrane segment at 3191–3211 (PVVFDTMVPWMLLPLVLYTAF) threads the bilayer. The Cytoplasmic portion of the chain corresponds to 3212 to 3259 (KCVQGCYMNSFNTSLLMLYQFMKLGFVIYTSSNTLTAYTEGNWELFFE). The chain crosses the membrane as a helical span at residues 3260–3280 (LVHTIVLANVSSNSLIGLIVF). Topologically, residues 3281-3298 (KCAKWMLYYCNATYFNNY) are lumenal. Residues 3299–3319 (VLMAVMVNGIGWLCTCYFGLY) traverse the membrane as a helical segment. At 3320–6631 (WWVNKVFGLT…FTSDSFVCTM (3312 aa)) the chain is on the cytoplasmic side. The RdRp Nsp7 cofactor domain maps to 3382–3464 (SKLSDVKCTT…DILKRSTVLQ (83 aa)). Positions 3465 to 3674 (SVTQEFSHIP…GHNKVDVALQ (210 aa)) constitute a RdRp Nsp8 cofactor domain. The 111-residue stretch at 3675 to 3785 (NNELMPHGVK…GAISNVVVLQ (111 aa)) folds into the Nsp9 ssRNA-binding domain. The region spanning 3787 to 3928 (KGHETEEVDA…CDSLRQPKPS (142 aa)) is the ExoN/MTase coactivator domain. The Zn(2+) site is built by Cys-3860, Cys-3863, His-3869, Cys-3880, Cys-3906, Cys-3909, Cys-3917, and Cys-3919. 2 zinc fingers span residues 3860–3880 (CLYCRAHIAHPGGAGNLDGRC) and 3906–3919 (CTVCQCWIGYGCQC). The NiRAN domain occupies 3942 to 4200 (YLNRVRGSSE…APERYFEYDV (259 aa)). The region spanning 4205–4303 (KSYDLLKYDY…MNQDNTMSFS (99 aa)) is the Nsp12 Interface domain. 5 residues coordinate Zn(2+): His-4234, Cys-4240, Cys-4245, Cys-4249, and Cys-4426. In terms of domain architecture, Nsp12 RNA-dependent RNA polymerase spans 4304-4870 (KMGLSQLMQF…NMYRAPTTLQ (567 aa)). The interval 4306–4519 (GLSQLMQFVG…HQKILKSIVN (214 aa)) is rdRp Fingers N-ter. Residues 4520 to 4558 (TRNAPVVIGTTKFYGGWDNMLRNLIQGVEDPILMGWDYP) are rdRp Palm N-ter. Residues 4550-4712 (PILMGWDYPK…CYNNTLAKQG (163 aa)) enclose the RdRp catalytic domain. Residues 4559–4617 (KCDRAMPNLLRIAASLVLARKHTNCCTWSERVYRLYNECAQVLSETVLATGGIYVKPGG) form a rdRp Fingers C-ter region. Zn(2+) contacts are provided by His-4580, Cys-4583, and Cys-4584. The tract at residues 4618–4753 (TSSGDATTAY…EKGPHEFCSQ (136 aa)) is rdRp Palm C-ter. Catalysis depends on residues Ser-4697, Asp-4698, and Asp-4699. A rdRp Thumb region spans residues 4754 to 4870 (HTMLVEVDGE…NMYRAPTTLQ (117 aa)). The 113-residue stretch at 4871–4983 (SCGVCVVCNS…DDFNQLATTN (113 aa)) folds into the CV ZBD domain. 12 residues coordinate Zn(2+): Cys-4875, Cys-4878, Cys-4886, Cys-4889, Cys-4896, Cys-4899, His-4903, His-4909, Cys-4920, Cys-4925, Cys-4942, and His-4945. One can recognise a (+)RNA virus helicase ATP-binding domain in the interval 5127 to 5307 (MVPACFVNNI…MVCVKPDIFL (181 aa)). 5152–5159 (GPPGSGKS) provides a ligand contact to ATP. The (+)RNA virus helicase C-terminal domain maps to 5308 to 5479 (AKCYRCPKEI…QGTGLFKICN (172 aa)). The ExoN domain maps to 5541 to 5755 (MFITRDEAIR…RCLAINNAFC (215 aa)). Catalysis depends on residues Asp-5559, Glu-5561, and Glu-5660. Zn(2+)-binding residues include Cys-5676, Cys-5678, Cys-5694, His-5697, His-5725, Cys-5729, and His-5732. Catalysis depends on residues His-5736 and Asp-5741. Cys-5747 provides a ligand contact to Zn(2+). In terms of domain architecture, N7-MTase spans 5764–5991 (YPHIANEDEV…NLWKSFSALQ (228 aa)). 5799–5805 (DIGNPKG) is a binding site for S-adenosyl-L-methionine. The interval 5879 to 5893 (CNGGSLYVNKHAFHT) is gpppA-binding. The Zn(2+) site is built by Cys-5917, Cys-5937, Cys-5948, and His-5951. Positions 5992–6052 (SIDNIAYNMY…SVAFELYAKR (61 aa)) constitute a Nsp15 N-terminal oligomerization domain. The region spanning 6053 to 6168 (NIRTLPNNRI…VYKRVNGAFV (116 aa)) is the AV-Nsp11N/CoV-Nsp15M domain. The 142-residue stretch at 6185–6326 (EPRSDVERDF…EDGIIKTCYP (142 aa)) folds into the NendoU domain. Catalysis depends on residues His-6214, His-6229, Lys-6269, Lys-6373, Asp-6457, Lys-6501, and Glu-6534. The 300-residue stretch at 6329–6628 (QSAWTCGYNM…NTSFTSDSFV (300 aa)) folds into the Nidovirus-type SAM-dependent 2'-O-MTase domain.

This sequence belongs to the coronaviruses polyprotein 1ab family. As to quaternary structure, interacts with host PHB and PHB2. Interacts with papain-like protease and non-structural protein 6. In terms of assembly, monomer. Homodimer. Only the homodimer shows catalytic activity. As to quaternary structure, eight copies of nsp7 and eight copies of nsp8 assemble to form a heterohexadecamer dsRNA-encircling ring structure. Eight copies of nsp7 and eight copies of nsp8 assemble to form a heterohexadecamer dsRNA-encircling ring structure. Interacts with ORF6 protein. In terms of assembly, homodimer. As to quaternary structure, homododecamer. Interacts with proofreading exoribonuclease nsp14 and 2'-O-methyltransferase nsp16; these interactions enhance nsp14 and nsp16 enzymatic activities. Interacts with host DDX1 (via C-terminus). Interacts with non-structural protein 10. In terms of assembly, homohexamer. As to quaternary structure, interacts with non-structural protein 10. Requires Mn(2+) as cofactor. The cofactor is Zn(2+). Post-translationally, specific enzymatic cleavages in vivo by its own proteases yield mature proteins. 3C-like proteinase nsp5 liberates nsps 6-16 from the polyprotein. Papain-like and 3C-like proteinases are autocatalytically processed. In terms of processing, N-glycosylated.

The protein localises to the host endoplasmic reticulum membrane. It is found in the host cytoplasm. It localises to the host perinuclear region. Its subcellular location is the host endoplasmic reticulum. The protein resides in the host endoplasmic reticulum-Golgi intermediate compartment. It catalyses the reaction Thiol-dependent hydrolysis of ester, thioester, amide, peptide and isopeptide bonds formed by the C-terminal Gly of ubiquitin (a 76-residue protein attached to proteins as an intracellular targeting signal).. The enzyme catalyses RNA(n) + a ribonucleoside 5'-triphosphate = RNA(n+1) + diphosphate. It carries out the reaction ATP + H2O = ADP + phosphate + H(+). The catalysed reaction is a 5'-end diphospho-ribonucleoside in mRNA + GTP + H(+) = a 5'-end (5'-triphosphoguanosine)-ribonucleoside in mRNA + diphosphate. It catalyses the reaction uridylyl-uridylyl-ribonucleotide-RNA = a 3'-end uridylyl-2',3'-cyclophospho-uridine-RNA + a 5'-end dephospho-ribonucleoside-RNA. The enzyme catalyses a 5'-end (N(7)-methyl 5'-triphosphoguanosine)-ribonucleoside in mRNA + S-adenosyl-L-methionine = a 5'-end (N(7)-methyl 5'-triphosphoguanosine)-(2'-O-methyl-ribonucleoside) in mRNA + S-adenosyl-L-homocysteine + H(+). Its function is as follows. Multifunctional protein involved in the transcription and replication of viral RNAs. Contains the proteinases responsible for the cleavages of the polyprotein. May play a role in the modulation of host cell survival signaling pathway by interacting with host PHB and PHB2. Indeed, these two proteins play a role in maintaining the functional integrity of the mitochondria and protecting cells from various stresses. Functionally, responsible for the cleavages located at the N-terminus of the replicase polyprotein. In addition, PL-PRO possesses a deubiquitinating/deISGylating activity and processes both 'Lys-48'- and 'Lys-63'-linked polyubiquitin chains from cellular substrates. In terms of biological role, plays a role in host membrane rearrangement that leads to creation of cytoplasmic double-membrane vesicles (DMV) necessary for viral replication. Alone is able to induce paired membranes. Coexpression of nsp3 and nsp4 does not result in the formation of DMVs. Its function is as follows. Responsible for the majority of cleavages as it cleaves the C-terminus of replicase polyprotein at 11 sites. Recognizes substrates containing the core sequence [ILMVF]-Q-|-[SGACN]. Inhibited by the substrate-analog Cbz-Val-Asn-Ser-Thr-Leu-Gln-CMK. Forms a hexadecamer with nsp8 (8 subunits of each) that may participate in viral replication by acting as a primase. Alternatively, may synthesize substantially longer products than oligonucleotide primers. Functionally, forms a hexadecamer with nsp7 (8 subunits of each) that may participate in viral replication by acting as a primase. Alternatively, may synthesize substantially longer products than oligonucleotide primers. In terms of biological role, forms a primer, NSP9-pU, which is utilized by the polymerase for the initiation of RNA chains. Interacts with ribosome signal recognition particle RNA (SRP). Together with NSP8, suppress protein integration into the cell membrane, thereby disrupting host immune defenses. Its function is as follows. Plays a pivotal role in viral transcription by stimulating both nsp14 3'-5' exoribonuclease and nsp16 2'-O-methyltransferase activities. Therefore plays an essential role in viral mRNAs cap methylation. RNA-directed RNA polymerase that catalyzes the transcription of viral genomic and subgenomic RNAs. Acts in complex with nsp7 and nsp8 to transcribe both the minus and positive strands of genomic RNA. The kinase-like NiRAN domain of NSP12 attaches one or more nucleotides to the amino terminus of NSP9, forming a covalent RNA-protein intermediate that serves as transcription/replication primer. Subgenomic RNAs (sgRNAs) are formed by discontinuous transcription: The polymerase has the ability to pause at transcription-regulating sequences (TRS) and jump to the leader TRS, resulting in a major deletion. This creates a series of subgenomic RNAs that are replicated, transcribed and translated. In addition, Nsp12 is a subunit of the viral RNA capping enzyme that catalyzes the RNA guanylyltransferase reaction for genomic and sub-genomic RNAs. Subsequently, the NiRAN domain transfers RNA to GDP, and forms the core cap structure GpppA-RNA. Functionally, multi-functional protein with a zinc-binding domain in N-terminus displaying RNA and DNA duplex-unwinding activities with 5' to 3' polarity. Activity of helicase is dependent on magnesium. In terms of biological role, enzyme possessing two different activities: an exoribonuclease activity acting on both ssRNA and dsRNA in a 3' to 5' direction and a N7-guanine methyltransferase activity. Acts as a proofreading exoribonuclease for RNA replication, thereby lowering The sensitivity of the virus to RNA mutagens. Its function is as follows. Plays a role in viral transcription/replication and prevents the simultaneous activation of host cell dsRNA sensors, such as MDA5/IFIH1, OAS, and PKR. Acts by degrading the 5'-polyuridines generated during replication of the poly(A) region of viral genomic and subgenomic RNAs. Catalyzes a two-step reaction in which a 2'3'-cyclic phosphate (2'3'-cP) is first generated by 2'-O transesterification, which is then hydrolyzed to a 3'-phosphate (3'-P). If not degraded, poly(U) RNA would hybridize with poly(A) RNA tails and activate host dsRNA sensors. Methyltransferase that mediates mRNA cap 2'-O-ribose methylation to the 5'-cap structure of viral mRNAs. N7-methyl guanosine cap is a prerequisite for binding of nsp16. Therefore plays an essential role in viral mRNAs cap methylation which is essential to evade immune system. The sequence is that of Replicase polyprotein 1ab (rep) from Gallus gallus (Chicken).